The following is a 391-amino-acid chain: Putative B3 domain-containing protein Os08g0325100 (391 aa).

The segment at residues 32–125 (GDFQHEIRGE…QFDVIIFDQV (94 aa)) is a DNA-binding region (TF-B3). Residues 143–232 (VQEGRTDATE…SSRAHPQPMP (90 aa)) form a disordered region. Polar residues predominate over residues 172 to 226 (EGRTNATETLNSSRAHSQPMPMQTPATETLNSSRAHSQDMPMQSPATETLNSSRA).

The protein localises to the nucleus. This Oryza sativa subsp. japonica (Rice) protein is Putative B3 domain-containing protein Os08g0325100.